The sequence spans 188 residues: Probable RNA-binding protein 18 (188 aa).

Residues histidine 23 to alanine 104 form the RRM domain. The segment at glutamate 151–arginine 188 is disordered. The segment covering glutamine 177–arginine 188 has biased composition (basic residues).

The chain is Probable RNA-binding protein 18 (rbm18) from Danio rerio (Zebrafish).